A 711-amino-acid chain; its full sequence is Hydroperoxide isomerase ALOXE3 (711 aa).

The PLAT domain maps to 2 to 119 (AVYRLCVTTG…TVELRPGTAR (118 aa)). The Lipoxygenase domain maps to 120–711 (TICQDSLPLL…PPLIENSVSI (592 aa)). Residues His-408, His-413, His-588, Asn-592, and Ile-711 each coordinate Fe cation.

The protein belongs to the lipoxygenase family. Fe cation is required as a cofactor. As to expression, predominantly expressed in skin.

The protein localises to the cytoplasm. It carries out the reaction a hydroperoxyeicosatetraenoate = a hydroxy-epoxy-eicosatetraenoate. It catalyses the reaction (12R)-hydroperoxy-(5Z,8Z,10E,14Z)-eicosatetraenoate = (8R)-hydroxy-(11R,12R)-epoxy-(5Z,9E,14Z)-eicosatrienoate. The enzyme catalyses (12S)-hydroperoxy-(5Z,8Z,10E,14Z)-eicosatetraenoate = (8R)-hydroxy-(11S,12S)-epoxy-(5Z,9E,14Z)-eicosatrienoate. The catalysed reaction is (12S)-hydroperoxy-(5Z,8Z,10E,14Z)-eicosatetraenoate = (10R)-hydroxy-(11S,12S)-epoxy-(5Z,8Z,14Z)-eicosatrienoate. It carries out the reaction (15S)-hydroperoxy-(5Z,8Z,11Z,13E)-eicosatetraenoate = (13R)-hydroxy-(14S,15S)-epoxy-(5Z,8Z,11Z)-eicosatrienoate. It catalyses the reaction (5S)-hydroperoxy-(6E,8Z,11Z,14Z)-eicosatetraenoate = 7R-hydroxy-5S,6S-epoxy-(8Z,11Z,14Z)-eicosatrienoate. The enzyme catalyses (13S)-hydroperoxy-(9Z,11E)-octadecadienoate = 11-hydroxy-(12S,13S)-epoxy-(9Z)-octadecenoate. The catalysed reaction is N-[omega-(9R)-hydroperoxy-(10E,12Z)-octadecadienoyloxy]acyl-beta-D-glucosyl-(1&lt;-&gt;1)-octadecasphing-4E-enine = a N-[omega-(9R,10R)-epoxy-(13R)-hydroxy-(11E)-octadecenoyloxy]acyl-beta-D-glucosyl-(1&lt;-&gt;1)-sphing-4E-enine. It carries out the reaction a N-[omega-(9R)-hydroperoxy-(10E,12Z)-octadecadienoyloxy]-acylsphin-4E-enine = a N-[omega-(9R,10R)-epoxy-(13R)-hydroxy-(11E)-octadecenoyloxy]-acylsphing-4E-enine. It catalyses the reaction a hydroperoxyeicosatetraenoate = an oxoeicosatetraenoate + H2O. The enzyme catalyses (12R)-hydroperoxy-(5Z,8Z,10E,14Z)-eicosatetraenoate = 12-oxo-(5Z,8Z,10E,14Z)-eicosatetraenoate + H2O. The catalysed reaction is (12S)-hydroperoxy-(5Z,8Z,10E,14Z)-eicosatetraenoate = 12-oxo-(5Z,8Z,10E,14Z)-eicosatetraenoate + H2O. It carries out the reaction (15S)-hydroperoxy-(5Z,8Z,11Z,13E)-eicosatetraenoate = 15-oxo-(5Z,8Z,11Z,13E)-eicosatetraenoate + H2O. It catalyses the reaction (13S)-hydroperoxy-(9Z,11E)-octadecadienoate = 13-oxo-(9Z,11E)-octadecadienoate + H2O. The enzyme catalyses (8S)-hydroperoxy-(5Z,9E,11Z,14Z)-eicosatetraenoate = (10R)-hydroxy-(8S,9S)-epoxy-(5Z,11Z,14Z)-eicosatrienoate. The catalysed reaction is (8R)-hydroperoxy-(5Z,9E,11Z,14Z)-eicosatetraenoate = 8-oxo-(5Z,9E,11Z,14Z)-eicosatetraenoate + H2O. It carries out the reaction (8S)-hydroperoxy-(5Z,9E,11Z,14Z)-eicosatetraenoate = 8-oxo-(5Z,9E,11Z,14Z)-eicosatetraenoate + H2O. It participates in lipid metabolism; hydroperoxy eicosatetraenoic acid biosynthesis. Its pathway is lipid metabolism; sphingolipid metabolism. Lipoxygenase activity is activated by 13(S)-HPODE leading to an active free ferric enzyme. The lipoxygenase and hydroperoxide isomerase activities are in competition and are reciprocally regulated by oxygen. The oxygen reacts with an epoxyallylic radical intermediate leading to an epoxyallylic peroxyl radical, which, due to its limited reactivity within the enzyme active site, it dissociates and leaves the enzyme in the activated free ferric state. Functionally, non-heme iron-containing lipoxygenase which is atypical in that it displays a prominent hydroperoxide isomerase activity and a reduced lipoxygenases activity. The hydroperoxide isomerase activity catalyzes the isomerization of hydroperoxides, derived from arachidonic and linoleic acid by ALOX12B, into hepoxilin-type epoxyalcohols and ketones. In presence of oxygen, oxygenates polyunsaturated fatty acids, including arachidonic acid, to produce fatty acid hydroperoxides. In the skin, acts downstream of ALOX12B on the linoleate moiety of esterified omega-hydroxyacyl-sphingosine (EOS) ceramides to produce an epoxy-ketone derivative, a crucial step in the conjugation of omega-hydroxyceramide to membrane proteins. Therefore plays a crucial role in the synthesis of corneocytes lipid envelope and the establishment of the skin barrier to water loss. In parallel, it may have a signaling function in barrier formation through the production of hepoxilins metabolites. Also plays a role in adipocyte differentiation through hepoxilin A3 and hepoxilin B3 production which in turn activate PPARG. Through the production of hepoxilins in the spinal cord, it may regulate inflammatory tactile allodynia. The sequence is that of Hydroperoxide isomerase ALOXE3 from Homo sapiens (Human).